We begin with the raw amino-acid sequence, 406 residues long: Imidazolonepropionase (406 aa).

The Fe(3+) site is built by H72 and H74. Positions 72 and 74 each coordinate Zn(2+). Residues R81, Y144, and H177 each coordinate 4-imidazolone-5-propanoate. An N-formimidoyl-L-glutamate-binding site is contributed by Y144. H242 contacts Fe(3+). H242 is a binding site for Zn(2+). Position 245 (Q245) interacts with 4-imidazolone-5-propanoate. D317 serves as a coordination point for Fe(3+). Residue D317 coordinates Zn(2+). Positions 319 and 321 each coordinate N-formimidoyl-L-glutamate. T322 contacts 4-imidazolone-5-propanoate.

It belongs to the metallo-dependent hydrolases superfamily. HutI family. Requires Zn(2+) as cofactor. Fe(3+) is required as a cofactor.

The protein resides in the cytoplasm. It catalyses the reaction 4-imidazolone-5-propanoate + H2O = N-formimidoyl-L-glutamate. It participates in amino-acid degradation; L-histidine degradation into L-glutamate; N-formimidoyl-L-glutamate from L-histidine: step 3/3. Its function is as follows. Catalyzes the hydrolytic cleavage of the carbon-nitrogen bond in imidazolone-5-propanoate to yield N-formimidoyl-L-glutamate. It is the third step in the universal histidine degradation pathway. In Yersinia pestis bv. Antiqua (strain Antiqua), this protein is Imidazolonepropionase.